The sequence spans 205 residues: Deoxyuridine 5'-triphosphate nucleotidohydrolase (205 aa).

Position 54 is a phosphoserine (serine 54). Residues 126 to 128 (RSG), 140 to 143 (GVID), glycine 151, and 199 to 200 (FG) contribute to the substrate site.

The protein belongs to the dUTPase family. Homotrimer. Requires Mg(2+) as cofactor. Expressed in all tissues examined. Higher levels in heart and kidney.

It localises to the cytoplasm. The protein localises to the nucleus. The catalysed reaction is dUTP + H2O = dUMP + diphosphate + H(+). The protein operates within pyrimidine metabolism; dUMP biosynthesis; dUMP from dCTP (dUTP route): step 2/2. Functionally, catalyzes the cleavage of 2'-deoxyuridine 5'-triphosphate (dUTP) into 2'-deoxyuridine 5'-monophosphate (dUMP) and inorganic pyrophosphate and through its action efficiently prevents uracil misincorporation into DNA and at the same time provides dUMP, the substrate for de novo thymidylate biosynthesis. Inhibits peroxisome proliferator-activated receptor (PPAR) activity by binding of its N-terminal to PPAR, preventing the latter's dimerization with retinoid X receptor. Essential for embryonic development. This chain is Deoxyuridine 5'-triphosphate nucleotidohydrolase (Dut), found in Rattus norvegicus (Rat).